Reading from the N-terminus, the 479-residue chain is Aspartyl/glutamyl-tRNA(Asn/Gln) amidotransferase subunit B (479 aa).

Belongs to the GatB/GatE family. GatB subfamily. In terms of assembly, heterotrimer of A, B and C subunits.

It carries out the reaction L-glutamyl-tRNA(Gln) + L-glutamine + ATP + H2O = L-glutaminyl-tRNA(Gln) + L-glutamate + ADP + phosphate + H(+). The catalysed reaction is L-aspartyl-tRNA(Asn) + L-glutamine + ATP + H2O = L-asparaginyl-tRNA(Asn) + L-glutamate + ADP + phosphate + 2 H(+). Allows the formation of correctly charged Asn-tRNA(Asn) or Gln-tRNA(Gln) through the transamidation of misacylated Asp-tRNA(Asn) or Glu-tRNA(Gln) in organisms which lack either or both of asparaginyl-tRNA or glutaminyl-tRNA synthetases. The reaction takes place in the presence of glutamine and ATP through an activated phospho-Asp-tRNA(Asn) or phospho-Glu-tRNA(Gln). The sequence is that of Aspartyl/glutamyl-tRNA(Asn/Gln) amidotransferase subunit B from Streptococcus pyogenes serotype M3 (strain ATCC BAA-595 / MGAS315).